Reading from the N-terminus, the 160-residue chain is 6-hydroxypseudooxynicotine dehydrogenase complex subunit beta (160 aa).

Residues 4–80 enclose the 2Fe-2S ferredoxin-type domain; the sequence is FRLTVEVNGV…NSRIETVESL (77 aa). 8 residues coordinate [2Fe-2S] cluster: Cys42, Cys47, Cys50, Cys62, Cys101, Cys104, Cys137, and Cys139.

In terms of assembly, heterohexamer of 2 alpha (kdhA), 2 beta (kdhB) and 2 gamma (kdhC) subunit. Dimer of heterotrimers. [2Fe-2S] cluster serves as cofactor.

The catalysed reaction is 6-hydroxypseudooxynicotine + A + H2O = 2,6-dihydroxypseudooxynicotine + AH2. Its pathway is alkaloid degradation; nicotine degradation. Functionally, molybdo-flavoprotein enzyme complex involved in nicotine degradation. The subunit gamma (large subunit) contains the substrate-binding sites, the subunit alpha (medium subunit) binds FAD and the subunit beta (small subunit) has a 2Fe-2S ferredoxin-type domain which binds 2 2Fe-2S clusters. The protein is 6-hydroxypseudooxynicotine dehydrogenase complex subunit beta (kdhB) of Paenarthrobacter nicotinovorans (Arthrobacter nicotinovorans).